Consider the following 228-residue polypeptide: MASEELQKDLEEVKVLLEKATRKRVRDALTAEKSKIETEIKNKMQQKSQKKAELLDNEKPAAVVAPITTGYTVKISNYGWDQSDKFVKIYITLSGVHQVPTENVQVHFTERSFDLLVKNLNGKSYSMIVNNLLKPISVEGSSKKVKTDTVLILCRKKVENTRWDYLTQVEKECKEKEKPSYDTETDPSEGLMNVLKKIYEDGDDDMKRTINKAWVESREKQAKGDTEF.

Alanine 2 bears the N-acetylalanine mark. The tract at residues 2–80 (ASEELQKDLE…YTVKISNYGW (79 aa)) is interaction with SIAH1. Position 3 is a phosphoserine (serine 3). 2 positions are modified to N6-acetyllysine: lysine 8 and lysine 19. The residue at position 34 (serine 34) is a Phosphoserine. In terms of domain architecture, CS spans 73-167 (VKISNYGWDQ…VENTRWDYLT (95 aa)). The interaction with SKP1 stretch occupies residues 73–228 (VKISNYGWDQ…EKQAKGDTEF (156 aa)). An N6-acetyllysine mark is found at lysine 85 and lysine 118. The interval 154–228 (CRKKVENTRW…EKQAKGDTEF (75 aa)) is interaction with S100A6. The region spanning 168 to 228 (QVEKECKEKE…EKQAKGDTEF (61 aa)) is the SGS domain.

Component of some large E3 complex at least composed of UBE2D1, SIAH1, CACYBP/SIP, SKP1, APC and TBL1X. Interacts directly with SIAH1, SIAH2 and SKP1. Interacts with protein of the S100 family S100A1, S100A6, S100B, S100P and S100A12 in a calcium-dependent manner. Post-translationally, phosphorylated on serine residues. Phosphorylated upon induction by RA or at high calcium concentrations.

The protein resides in the nucleus. Its subcellular location is the cytoplasm. Its function is as follows. May be involved in calcium-dependent ubiquitination and subsequent proteasomal degradation of target proteins. Probably serves as a molecular bridge in ubiquitin E3 complexes. Participates in the ubiquitin-mediated degradation of beta-catenin (CTNNB1). In Macaca fascicularis (Crab-eating macaque), this protein is Calcyclin-binding protein (CACYBP).